We begin with the raw amino-acid sequence, 34 residues long: Photosystem II reaction center protein M (34 aa).

A helical transmembrane segment spans residues 5–25; sequence ILAFIATALFVLIPTAFLIIL.

Belongs to the PsbM family. PSII is composed of 1 copy each of membrane proteins PsbA, PsbB, PsbC, PsbD, PsbE, PsbF, PsbH, PsbI, PsbJ, PsbK, PsbL, PsbM, PsbT, PsbX, PsbY, PsbZ, Psb30/Ycf12, at least 3 peripheral proteins of the oxygen-evolving complex and a large number of cofactors. It forms dimeric complexes.

It is found in the plastid. The protein resides in the chloroplast thylakoid membrane. One of the components of the core complex of photosystem II (PSII). PSII is a light-driven water:plastoquinone oxidoreductase that uses light energy to abstract electrons from H(2)O, generating O(2) and a proton gradient subsequently used for ATP formation. It consists of a core antenna complex that captures photons, and an electron transfer chain that converts photonic excitation into a charge separation. This subunit is found at the monomer-monomer interface. The sequence is that of Photosystem II reaction center protein M from Zygnema circumcarinatum (Green alga).